Consider the following 150-residue polypeptide: Transthyretin (150 aa).

An N-terminal signal peptide occupies residues 1–20; sequence MGSSSLLLVCLAGMVYLTEA. Position 33 is a sulfocysteine (cysteine 33). Residues lysine 38, glutamate 77, and serine 140 each contribute to the L-thyroxine site.

This sequence belongs to the transthyretin family. As to quaternary structure, homotetramer. Dimer of dimers. In the homotetramer, subunits assemble around a central channel that can accommodate two ligand molecules. Interacts with RBP4. In terms of processing, sulfonation of the reactive cysteine Cys-33 enhances the stability of the native conformation of TTR, avoiding misassembly of the protein leading to amyloid formation. In terms of tissue distribution, detected in choroid plexus (at protein level). Detected in choroid plexus.

It localises to the secreted. Functionally, thyroid hormone-binding protein. Probably transports thyroxine from the bloodstream to the brain. The protein is Transthyretin (TTR) of Tiliqua rugosa (Shingleback lizard).